We begin with the raw amino-acid sequence, 363 residues long: Uptake hydrogenase small subunit (363 aa).

Positions 1 to 43 (MIETFYEVMRRQGISRRSFLKYCSLTATSLGLSPVFVPKIVHA) form a signal peptide, tat-type signal. Residues Cys60, Cys63, Cys158, Cys192, His230, Cys233, Cys258, and Cys264 each contribute to the [4Fe-4S] cluster site. [3Fe-4S] cluster-binding residues include Cys273, Cys292, and Cys295.

Belongs to the [NiFe]/[NiFeSe] hydrogenase small subunit family. In terms of assembly, heterodimer of a large and a small subunit. Requires [4Fe-4S] cluster as cofactor. [3Fe-4S] cluster is required as a cofactor. In terms of processing, predicted to be exported by the Tat system. The position of the signal peptide cleavage has not been experimentally proven.

Its subcellular location is the cell membrane. It carries out the reaction H2 + A = AH2. In terms of biological role, this enzyme recycles the H(2) produced by nitrogenase to increase the production of ATP and to protect nitrogenase against inhibition or damage by O(2) under carbon- or phosphate-limited conditions. The protein is Uptake hydrogenase small subunit (hupS) of Alcaligenes hydrogenophilus.